A 1547-amino-acid polypeptide reads, in one-letter code: Tubby-related protein 4 (1547 aa).

3 WD repeats span residues 80 to 119, 123 to 162, and 165 to 204; these read GHNS…WSVE, DRGA…HWSS, and NLES…LAHV. One can recognise an SOCS box domain in the interval 364 to 414; sequence ALYVVRVEHRVSSLQLLCQQAIASTLREDKDVNKLTLPPRLCSYLSTAFIP. Residues 530-580 form a disordered region; it reads SPKISRSSKSPKLPRISIEARKSPKLPRAAQEISRSPRLPMRKPSMGSPSL. Residues 533–546 show a composition bias toward low complexity; the sequence is ISRSSKSPKLPRIS. Ser-577 carries the phosphoserine modification. 2 positions are modified to asymmetric dimethylarginine: Arg-949 and Arg-954. A phosphoserine mark is found at Ser-1347 and Ser-1378. The interval 1374 to 1414 is disordered; the sequence is SLISSPRLGREKKKVKSQKDQLKSKKLNKTNEFQDSSESEP. Residues 1436–1547 form a TUB region; that stretch reads SKRSLRTASE…ALANVTQRLK (112 aa).

Belongs to the TUB family.

The protein localises to the cytoplasm. The protein operates within protein modification; protein ubiquitination. Its function is as follows. May be a substrate-recognition component of a SCF-like ECS (Elongin-Cullin-SOCS-box protein) E3 ubiquitin ligase complex which mediates the ubiquitination and subsequent proteasomal degradation of target proteins. This Mus musculus (Mouse) protein is Tubby-related protein 4 (Tulp4).